A 395-amino-acid chain; its full sequence is Glutamate N-acetyltransferase (395 aa).

Residues Thr-146, Lys-169, Thr-180, Glu-263, Asn-390, and Thr-395 each contribute to the substrate site. The active-site Nucleophile is the Thr-180.

It belongs to the ArgJ family. Heterotetramer of two alpha and two beta chains.

Its subcellular location is the cytoplasm. The catalysed reaction is N(2)-acetyl-L-ornithine + L-glutamate = N-acetyl-L-glutamate + L-ornithine. It participates in amino-acid biosynthesis; L-arginine biosynthesis; L-ornithine and N-acetyl-L-glutamate from L-glutamate and N(2)-acetyl-L-ornithine (cyclic): step 1/1. Functionally, catalyzes the transfer of the acetyl group from N(2)-acetylornithine to glutamate, forming N-acetylglutamate and L-ornithine. The sequence is that of Glutamate N-acetyltransferase from Methanosarcina mazei (strain ATCC BAA-159 / DSM 3647 / Goe1 / Go1 / JCM 11833 / OCM 88) (Methanosarcina frisia).